The following is a 617-amino-acid chain: Electron transfer flavoprotein-ubiquinone oxidoreductase, mitochondrial (617 aa).

A mitochondrion-targeting transit peptide spans 1 to 33 (MLVPLAKLSCLAYQCFHALKIKKNYLPLCATRW). 71–85 (VVIVGAGPAGLSAAV) is an FAD binding site. Position 96 is an N6-acetyllysine (Lys-96). The stretch at 109–130 (IGAHTLSGACLDPGAFKELFPD) is an intramembrane region. N6-acetyllysine is present on residues Lys-132 and Lys-223. Residues Gly-305 and Gly-306 each coordinate a ubiquinone. Lys-357 bears the N6-acetyllysine mark. Residues 428–447 (IGLHVTEYEDNLKNSWVWKE) lie within the membrane without spanning it. A Phosphoserine modification is found at Ser-551. The [4Fe-4S] cluster site is built by Cys-561, Cys-586, Cys-589, and Cys-592. Residues 577 to 606 (FRLQINAQNCVHCKTCDIKDPSQNINWVVP) form the 4Fe-4S ferredoxin-type domain.

It belongs to the ETF-QO/FixC family. In terms of assembly, monomer. It depends on [4Fe-4S] cluster as a cofactor. Requires FAD as cofactor.

It localises to the mitochondrion inner membrane. The enzyme catalyses a ubiquinone + reduced [electron-transfer flavoprotein] = a ubiquinol + oxidized [electron-transfer flavoprotein] + H(+). Its function is as follows. Accepts electrons from ETF and reduces ubiquinone. The polypeptide is Electron transfer flavoprotein-ubiquinone oxidoreductase, mitochondrial (Homo sapiens (Human)).